A 174-amino-acid chain; its full sequence is DNA-directed RNA polymerase IV subunit 7 (174 aa).

It belongs to the eukaryotic RPB7/RPC8 RNA polymerase subunit family. Component of the RNA polymerase IV complex. Interacts with NRPD1.

The protein resides in the nucleus. Its function is as follows. DNA-dependent RNA polymerase catalyzes the transcription of DNA into RNA using the four ribonucleoside triphosphates as substrates. Component of RNA polymerase IV which mediates 24-nt short-interfering RNAs (siRNA) accumulation. Implicated in siRNA-directed heterochromatin formation through the action of DCL3 and AGO4, and subsequent DNA methylation-dependent silencing of targeted sequences. Essential component of a self-reinforcing loop coupling de novo DNA methylation to siRNA production. Required for intercellular but not intracellular RNA interference (RNAi) leading to systemic post-transcriptional gene silencing. Involved in the maintenance of post-transcriptional RNA silencing. This is DNA-directed RNA polymerase IV subunit 7 (NRPD7) from Arabidopsis thaliana (Mouse-ear cress).